The primary structure comprises 497 residues: Malonate-semialdehyde dehydrogenase (497 aa).

5 residues coordinate NAD(+): phenylalanine 148, lysine 172, glutamate 175, arginine 176, and serine 225. Catalysis depends on cysteine 280, which acts as the Nucleophile. Glutamate 382 serves as a coordination point for NAD(+).

Belongs to the aldehyde dehydrogenase family.

The enzyme catalyses 3-oxopropanoate + NAD(+) + CoA + H2O = hydrogencarbonate + acetyl-CoA + NADH + H(+). Involved in the degradation of beta-alanine. Likely catalyzes the NAD(+)- and CoA-dependent oxidative decarboxylation of malonate semialdehyde (3-oxopropanoate) to acetyl-CoA. The sequence is that of Malonate-semialdehyde dehydrogenase from Pseudomonas aeruginosa (strain ATCC 15692 / DSM 22644 / CIP 104116 / JCM 14847 / LMG 12228 / 1C / PRS 101 / PAO1).